The sequence spans 874 residues: MKAAEIREKFLKFFESKGHTIVRSSSLVPGNDPTLMFTNSGMVQFKDVFLGTDQRPYTRATTAQRSVRAGGKHNDLENVGYTARHHTFFEMLGNFSFGDYFKHDAIRFAWELLTTVYQLPKDKLWVTVYQEDDEAYDIWAKEVGVPAERIIRIGDNKGARYASDNFWTMGDTGPCGPCTEIFYDHGPDVWGGPPGSPEEDGDRYIEIWNLVFMQFNRDAQGNMTRLPKQSVDTGMGLERLAAVLQHVHSNYEIDLFQNLIKAAARVTETADLNNNSLKVIADHIRACSFLIVDGVIPGNEGRGYVLRRIVRRAIRHGYKLGRKGAFFHKLVADLVAEMGAAYPELKEAEQRVTDVLRQEEERFFETIEHGMSILEAALADVEAKGGKVLDGELAFKLHDTYGFPLDLTADVCRERGMTVDEPAFDDAMARQREQARAAGKFKATQGLEYTGAKTTFHGYEEIAFDDAKVVALYVEGSSVGEVKAGQDAVVVLDHTPFYAESGGQVGDQGVLANAATRFAVADTLKVQADVIGHHGTLEQGTLKVGDVLRAEIDAQRRARTQRNHSATHLMHKALREVLGAHVQQKGSLVDADKTRFDFAHNAPLTDDEIRRVEQIVNDEILANAPGIVRVMPYDEAVKGGAMALFGEKYGDEVRVLDLGFSRELCGGTHVQRTGDIGLFKIVVEGGVAAGIRRVEAITGDNAVRYVQELDARVNEAAAALKAQPSELTQRIAQVQEQVKSLEKELGALKSKLASSQGDELAQQAVEVGGVFVLAATLDGADAKTLRETVDKLKYKLKSAAIVLAAVEGGKVSLIAGVTPEASKKVKAGELVNFVAQQVGGKGGGRPDMAQAGGTEPANLPGALAGVKGWIEARL.

4 residues coordinate Zn(2+): histidine 564, histidine 568, cysteine 665, and histidine 669.

It belongs to the class-II aminoacyl-tRNA synthetase family. It depends on Zn(2+) as a cofactor.

The protein localises to the cytoplasm. The enzyme catalyses tRNA(Ala) + L-alanine + ATP = L-alanyl-tRNA(Ala) + AMP + diphosphate. Functionally, catalyzes the attachment of alanine to tRNA(Ala) in a two-step reaction: alanine is first activated by ATP to form Ala-AMP and then transferred to the acceptor end of tRNA(Ala). Also edits incorrectly charged Ser-tRNA(Ala) and Gly-tRNA(Ala) via its editing domain. The protein is Alanine--tRNA ligase of Burkholderia vietnamiensis (strain G4 / LMG 22486) (Burkholderia cepacia (strain R1808)).